Reading from the N-terminus, the 281-residue chain is 3-mercaptopyruvate sulfurtransferase (281 aa).

2 consecutive Rhodanese domains span residues 17–135 (DDPE…LLEE) and 165–278 (HENT…LPVE). Arg179 provides a ligand contact to substrate. Residue Cys238 is the Cysteine persulfide intermediate of the active site. Residues 238-244 (CGSGVTA) form a substrate specificity region.

As to quaternary structure, monomer.

The protein localises to the cytoplasm. The enzyme catalyses 2-oxo-3-sulfanylpropanoate + [thioredoxin]-dithiol = [thioredoxin]-disulfide + hydrogen sulfide + pyruvate + H(+). Functionally, catalyzes the transfer of sulfur from 3-mercaptopyruvate to a thiol-containing acceptor to form an intramolecular disulfide releasing hydrogen sulfide and pyruvate. May be involved in the enhancement of bacterial growth inhibition by serine. In Escherichia coli (strain K12), this protein is 3-mercaptopyruvate sulfurtransferase (sseA).